Consider the following 264-residue polypeptide: S-adenosylmethionine decarboxylase proenzyme (264 aa).

Residue Ser112 is the Schiff-base intermediate with substrate; via pyruvic acid of the active site. Ser112 bears the Pyruvic acid (Ser); by autocatalysis mark. The active-site Proton acceptor; for processing activity is the His117. Cys140 serves as the catalytic Proton donor; for catalytic activity.

Belongs to the prokaryotic AdoMetDC family. Type 2 subfamily. As to quaternary structure, heterooctamer of four alpha and four beta chains arranged as a tetramer of alpha/beta heterodimers. Pyruvate serves as cofactor. In terms of processing, is synthesized initially as an inactive proenzyme. Formation of the active enzyme involves a self-maturation process in which the active site pyruvoyl group is generated from an internal serine residue via an autocatalytic post-translational modification. Two non-identical subunits are generated from the proenzyme in this reaction, and the pyruvate is formed at the N-terminus of the alpha chain, which is derived from the carboxyl end of the proenzyme. The post-translation cleavage follows an unusual pathway, termed non-hydrolytic serinolysis, in which the side chain hydroxyl group of the serine supplies its oxygen atom to form the C-terminus of the beta chain, while the remainder of the serine residue undergoes an oxidative deamination to produce ammonia and the pyruvoyl group blocking the N-terminus of the alpha chain.

The enzyme catalyses S-adenosyl-L-methionine + H(+) = S-adenosyl 3-(methylsulfanyl)propylamine + CO2. It participates in amine and polyamine biosynthesis; S-adenosylmethioninamine biosynthesis; S-adenosylmethioninamine from S-adenosyl-L-methionine: step 1/1. In terms of biological role, catalyzes the decarboxylation of S-adenosylmethionine to S-adenosylmethioninamine (dcAdoMet), the propylamine donor required for the synthesis of the polyamines spermine and spermidine from the diamine putrescine. The chain is S-adenosylmethionine decarboxylase proenzyme from Yersinia pseudotuberculosis serotype I (strain IP32953).